A 1165-amino-acid chain; its full sequence is Symplekin (1165 aa).

HEAT repeat units lie at residues 23–58 (TATA…TVLG), 61–95 (AELA…QVCK), 98–140 (VELL…YLCS), 147–186 (SAEQ…GVVV), and 218–257 (KLQE…IAKM). Positions 365–384 (DQQQREMELDTEELERQKQK) are disordered. Residues 367–384 (QQREMELDTEELERQKQK) are compositionally biased toward basic and acidic residues.

This sequence belongs to the Symplekin family. In terms of assembly, interacts with Cpsf73 and Cpsf100 forming a core cleavage factor required for both polyadenylated and histone mRNA processing. Interacts with Slbp and Lsm11.

The protein resides in the nucleus. Its function is as follows. Component of a protein complex required for cotranscriptional processing of 3'-ends of polyadenylated and histone pre-mRNA. Involved in germline stem cell transit amplification, differentiation and mitosis-to-meiosis transition. In Drosophila melanogaster (Fruit fly), this protein is Symplekin.